We begin with the raw amino-acid sequence, 583 residues long: Nuclear distribution protein nudE homolog 1 (583 aa).

Positions 14–195 (ATLEDTLGWY…QDKFKKQESR (182 aa)) form a coiled coil. 3 disordered regions span residues 34–68 (LAEF…KAET), 211–339 (TFDG…TSNS), and 358–583 (HSVR…GETY). A compositionally biased stretch (basic and acidic residues) spans 35–67 (AEFRDSSRELEQELEKDIERAEKQERHHQEKAE). Composition is skewed to polar residues over residues 219-235 (PGST…TDSK), 279-319 (RSRL…TMRT), 329-339 (SASNKLPTSNS), 379-392 (NVYS…SITI), and 399-422 (SGSA…STPK). Over residues 453 to 469 (RPSSRASTSYATSYARP) the composition is skewed to low complexity. Residues 529–538 (RRGTYSSQGG) show a composition bias toward polar residues.

This sequence belongs to the nudE family. As to quaternary structure, self-associates. Interacts with PAC1.

The protein localises to the cytoplasm. It is found in the cytoskeleton. Required for nuclear migration. The polypeptide is Nuclear distribution protein nudE homolog 1 (NDE1) (Gibberella zeae (strain ATCC MYA-4620 / CBS 123657 / FGSC 9075 / NRRL 31084 / PH-1) (Wheat head blight fungus)).